A 148-amino-acid polypeptide reads, in one-letter code: MSIIDNRKAFHDYFIEETYEAGLVLEGWEVKAIRAGRANIKEAYVILRGEELFILGMHISALQSASTHVETDPVRTRKLLMHAKEIAKLIGKVERAGFTLVPLDLHYAKGRIKATIGLAKGKKQYDKRESEKERDWERDKARLMRVKT.

Positions 127–142 are enriched in basic and acidic residues; sequence KRESEKERDWERDKAR. The segment at 127–148 is disordered; the sequence is KRESEKERDWERDKARLMRVKT.

It belongs to the SmpB family.

The protein resides in the cytoplasm. In terms of biological role, required for rescue of stalled ribosomes mediated by trans-translation. Binds to transfer-messenger RNA (tmRNA), required for stable association of tmRNA with ribosomes. tmRNA and SmpB together mimic tRNA shape, replacing the anticodon stem-loop with SmpB. tmRNA is encoded by the ssrA gene; the 2 termini fold to resemble tRNA(Ala) and it encodes a 'tag peptide', a short internal open reading frame. During trans-translation Ala-aminoacylated tmRNA acts like a tRNA, entering the A-site of stalled ribosomes, displacing the stalled mRNA. The ribosome then switches to translate the ORF on the tmRNA; the nascent peptide is terminated with the 'tag peptide' encoded by the tmRNA and targeted for degradation. The ribosome is freed to recommence translation, which seems to be the essential function of trans-translation. This chain is SsrA-binding protein, found in Aromatoleum aromaticum (strain DSM 19018 / LMG 30748 / EbN1) (Azoarcus sp. (strain EbN1)).